The chain runs to 117 residues: Small ribosomal subunit protein bS6 (117 aa).

The disordered stretch occupies residues 96 to 117 (HAEGPSVQMQKRDERDSRRERR). The span at 105-117 (QKRDERDSRRERR) shows a compositional bias: basic and acidic residues.

It belongs to the bacterial ribosomal protein bS6 family.

In terms of biological role, binds together with bS18 to 16S ribosomal RNA. This chain is Small ribosomal subunit protein bS6, found in Ruegeria pomeroyi (strain ATCC 700808 / DSM 15171 / DSS-3) (Silicibacter pomeroyi).